The following is a 903-amino-acid chain: MAESLRLLHMTRSVVSFNRCLTEKISYRRVPSFSYFTDFLNQVNSVSTTNFSFVFKECAKQGALELGKQAHAHMIISGFRPTTFVLNCLLQVYTNSRDFVSASMVFDKMPLRDVVSWNKMINGYSKSNDMFKANSFFNMMPVRDVVSWNSMLSGYLQNGESLKSIEVFVDMGREGIEFDGRTFAIILKVCSFLEDTSLGMQIHGIVVRVGCDTDVVAASALLDMYAKGKRFVESLRVFQGIPEKNSVSWSAIIAGCVQNNLLSLALKFFKEMQKVNAGVSQSIYASVLRSCAALSELRLGGQLHAHALKSDFAADGIVRTATLDMYAKCDNMQDAQILFDNSENLNRQSYNAMITGYSQEEHGFKALLLFHRLMSSGLGFDEISLSGVFRACALVKGLSEGLQIYGLAIKSSLSLDVCVANAAIDMYGKCQALAEAFRVFDEMRRRDAVSWNAIIAAHEQNGKGYETLFLFVSMLRSRIEPDEFTFGSILKACTGGSLGYGMEIHSSIVKSGMASNSSVGCSLIDMYSKCGMIEEAEKIHSRFFQRANVSGTMEELEKMHNKRLQEMCVSWNSIISGYVMKEQSEDAQMLFTRMMEMGITPDKFTYATVLDTCANLASAGLGKQIHAQVIKKELQSDVYICSTLVDMYSKCGDLHDSRLMFEKSLRRDFVTWNAMICGYAHHGKGEEAIQLFERMILENIKPNHVTFISILRACAHMGLIDKGLEYFYMMKRDYGLDPQLPHYSNMVDILGKSGKVKRALELIREMPFEADDVIWRTLLGVCTIHRNNVEVAEEATAALLRLDPQDSSAYTLLSNVYADAGMWEKVSDLRRNMRGFKLKKEPGCSWVELKDELHVFLVGDKAHPRWEEIYEELGLIYSEMKPFDDSSFVRGVEVEEEDQWCYC.

The transit peptide at 1 to 31 (MAESLRLLHMTRSVVSFNRCLTEKISYRRVP) directs the protein to the mitochondrion. PPR repeat units lie at residues 47-81 (STTN…GFRP), 82-112 (TTFV…MPLR), 113-143 (DVVS…MPVR), 144-178 (DVVS…GIEF), 179-213 (DGRT…GCDT), 214-244 (DVVA…IPEK), 245-279 (NSVS…NAGV), 280-314 (SQSI…DFAA), 346-380 (NRQS…GLGF), 381-415 (DEIS…SLSL), 416-446 (DVCV…MRRR), 447-481 (DAVS…RIEP), 482-515 (DEFT…GMAS), 516-550 (NSSV…ANVS), 567-601 (MCVS…GITP), 602-636 (DKFT…ELQS), 637-667 (DVYI…SLRR), 668-702 (DFVT…NIKP), 703-738 (NHVT…GLDP), and 739-769 (QLPH…MPFE). The interval 774 to 850 (IWRTLLGVCT…EPGCSWVELK (77 aa)) is type E motif. The tract at residues 851-881 (DELHVFLVGDKAHPRWEEIYEELGLIYSEMK) is type E(+) motif.

It belongs to the PPR family. PCMP-E subfamily. In terms of assembly, interacts with MORF1/RIP8.

It localises to the mitochondrion. Its function is as follows. Involved in C-to-U editing of mitochondrial RNA. Required for RNA editing at 8 sites in 6 different mRNAs in mitochondria. This Arabidopsis thaliana (Mouse-ear cress) protein is Pentatricopeptide repeat-containing protein At3g02330, mitochondrial (PCMP-E90).